Reading from the N-terminus, the 30-residue chain is Dermaseptin-3.1TR (30 aa).

In terms of tissue distribution, expressed by the skin glands.

It localises to the secreted. In terms of biological role, has antimicrobial activity. This Phyllomedusa trinitatis (Trinidad leaf frog) protein is Dermaseptin-3.1TR.